The primary structure comprises 152 residues: MSDPIKVDVRQLPHAEGLPLPSYQSTQAAGLDLIAAIGEQAPLVLAAGRRAMVPTGLVIALPDGYEAQVRPRSGLAARHGVTVLNSPGTVDADYRGEINVLLVNLGSEAFTIRRGERIAQMIVAPVTRVELVRAAALPATPRGSGGFGSTGR.

Substrate is bound by residues 72–74, asparagine 85, and 89–91; these read RSG and TVD.

Belongs to the dUTPase family. Requires Mg(2+) as cofactor.

The catalysed reaction is dUTP + H2O = dUMP + diphosphate + H(+). Its pathway is pyrimidine metabolism; dUMP biosynthesis; dUMP from dCTP (dUTP route): step 2/2. Functionally, this enzyme is involved in nucleotide metabolism: it produces dUMP, the immediate precursor of thymidine nucleotides and it decreases the intracellular concentration of dUTP so that uracil cannot be incorporated into DNA. The protein is Deoxyuridine 5'-triphosphate nucleotidohydrolase of Nitrobacter winogradskyi (strain ATCC 25391 / DSM 10237 / CIP 104748 / NCIMB 11846 / Nb-255).